Here is a 334-residue protein sequence, read N- to C-terminus: Holliday junction branch migration complex subunit RuvB (334 aa).

Positions 1–182 (MNERMVDQSM…FGVHLRLEYY (182 aa)) are large ATPase domain (RuvB-L). ATP-binding positions include L21, R22, G63, K66, T67, T68, 129–131 (EDF), R172, Y182, and R219. Residue T67 coordinates Mg(2+). Residues 183–253 (NESDLKEIII…TTKHALGLLQ (71 aa)) are small ATPAse domain (RuvB-S). Residues 256–334 (QHGLDYIDHK…HFAKSNEERE (79 aa)) are head domain (RuvB-H). Positions 292, 311, and 316 each coordinate DNA.

It belongs to the RuvB family. In terms of assembly, homohexamer. Forms an RuvA(8)-RuvB(12)-Holliday junction (HJ) complex. HJ DNA is sandwiched between 2 RuvA tetramers; dsDNA enters through RuvA and exits via RuvB. An RuvB hexamer assembles on each DNA strand where it exits the tetramer. Each RuvB hexamer is contacted by two RuvA subunits (via domain III) on 2 adjacent RuvB subunits; this complex drives branch migration. In the full resolvosome a probable DNA-RuvA(4)-RuvB(12)-RuvC(2) complex forms which resolves the HJ.

It localises to the cytoplasm. The enzyme catalyses ATP + H2O = ADP + phosphate + H(+). Its function is as follows. The RuvA-RuvB-RuvC complex processes Holliday junction (HJ) DNA during genetic recombination and DNA repair, while the RuvA-RuvB complex plays an important role in the rescue of blocked DNA replication forks via replication fork reversal (RFR). RuvA specifically binds to HJ cruciform DNA, conferring on it an open structure. The RuvB hexamer acts as an ATP-dependent pump, pulling dsDNA into and through the RuvAB complex. RuvB forms 2 homohexamers on either side of HJ DNA bound by 1 or 2 RuvA tetramers; 4 subunits per hexamer contact DNA at a time. Coordinated motions by a converter formed by DNA-disengaged RuvB subunits stimulates ATP hydrolysis and nucleotide exchange. Immobilization of the converter enables RuvB to convert the ATP-contained energy into a lever motion, pulling 2 nucleotides of DNA out of the RuvA tetramer per ATP hydrolyzed, thus driving DNA branch migration. The RuvB motors rotate together with the DNA substrate, which together with the progressing nucleotide cycle form the mechanistic basis for DNA recombination by continuous HJ branch migration. Branch migration allows RuvC to scan DNA until it finds its consensus sequence, where it cleaves and resolves cruciform DNA. The chain is Holliday junction branch migration complex subunit RuvB from Staphylococcus aureus (strain MRSA252).